Reading from the N-terminus, the 313-residue chain is Protein sprouty homolog 1 (313 aa).

M1 is subject to N-acetylmethionine. Residues 43 to 152 (QIKAIRGSNE…RSDRVIRTQP (110 aa)) form a disordered region. The span at 69 to 79 (PRPEKQERTHE) shows a compositional bias: basic and acidic residues. Low complexity predominate over residues 106 to 125 (SRSTSTGSAASSGSSSSVSS). Residues 177–289 (QCGKCKCGEC…CYDWTHRPGC (113 aa)) form the SPR domain.

The protein belongs to the sprouty family. In terms of assembly, forms heterodimers with SPRY2. Interacts with TESK1. Interacts with CAV1 (via C-terminus).

Its subcellular location is the cytoplasm. It is found in the membrane. Inhibits fibroblast growth factor (FGF)-induced retinal lens fiber differentiation, probably by inhibiting FGF-mediated phosphorylation of ERK1/2. Inhibits TGFB-induced epithelial-to-mesenchymal transition in lens epithelial cells. In Mus musculus (Mouse), this protein is Protein sprouty homolog 1 (Spry1).